The following is a 494-amino-acid chain: Cytochrome P450 2A13 (494 aa).

Residue N297 coordinates substrate. C439 lines the heme pocket.

Belongs to the cytochrome P450 family. Heme serves as cofactor. As to expression, expressed in liver and a number of extrahepatic tissues, including nasal mucosa, lung, trachea, brain, mammary gland, prostate, testis, and uterus, but not in heart, kidney, bone marrow, colon, small intestine, spleen, stomach, thymus, or skeletal muscle.

The protein resides in the endoplasmic reticulum membrane. It localises to the microsome membrane. It carries out the reaction an organic molecule + reduced [NADPH--hemoprotein reductase] + O2 = an alcohol + oxidized [NADPH--hemoprotein reductase] + H2O + H(+). In terms of biological role, exhibits a coumarin 7-hydroxylase activity. Active in the metabolic activation of hexamethylphosphoramide, N,N-dimethylaniline, 2'-methoxyacetophenone, N-nitrosomethylphenylamine, and the tobacco-specific carcinogen, 4-(methylnitrosamino)-1-(3-pyridyl)-1-butanone. Possesses phenacetin O-deethylation activity. This chain is Cytochrome P450 2A13 (CYP2A13), found in Homo sapiens (Human).